Consider the following 103-residue polypeptide: Large ribosomal subunit protein bL21 (103 aa).

Belongs to the bacterial ribosomal protein bL21 family. In terms of assembly, part of the 50S ribosomal subunit. Contacts protein L20.

This protein binds to 23S rRNA in the presence of protein L20. In Cupriavidus metallidurans (strain ATCC 43123 / DSM 2839 / NBRC 102507 / CH34) (Ralstonia metallidurans), this protein is Large ribosomal subunit protein bL21.